We begin with the raw amino-acid sequence, 1108 residues long: Probable E3 ubiquitin ligase SUD1 (1108 aa).

The tract at residues 1-60 (MEISPADSLSISGAAASEVVSEPSVSSSSSSSSPNQASPNPFSNMDPAVSTATGSRYVDD) is disordered. Residues 10–44 (SISGAAASEVVSEPSVSSSSSSSSPNQASPNPFSN) are compositionally biased toward low complexity. Residues 60-121 (DDEDEEDVCR…EVCKHPFSFS (62 aa)) form an RING-CH-type zinc finger. C68, C71, C85, C87, H95, C98, C111, and C114 together coordinate Zn(2+). A run of 2 helical transmembrane segments spans residues 157–177 (FVLS…WRLA) and 197–217 (VILT…FIFL). Basic and acidic residues predominate over residues 237 to 246 (ERDDDVDRNG). The tract at residues 237–273 (ERDDDVDRNGARAARRPAGQANRNLAGEGNGEDAGDQ) is disordered. A coiled-coil region spans residues 286–308 (ENVLARLDIQAARLEAQVEQMFD). 8 helical membrane-spanning segments follow: residues 339–359 (FTVL…PFTL), 362–382 (IILY…VAAS), 462–482 (AVGY…IALI), 489–509 (PLTV…PSLL), 525–545 (VAFL…WWLD), 572–592 (LVHW…VSLL), 630–650 (VLLS…LPVK), and 669–689 (PFTE…FIIE). The disordered stretch occupies residues 762–784 (PNRSRLRAGNVNTGEEYEDDDEQ). A run of 6 helical transmembrane segments spans residues 796-816 (IILL…ALIV), 844-864 (YAFV…RYAI), 894-914 (AIWV…LVIV), 923-943 (SPVF…KIWT), 982-1002 (EIVF…YVLA), and 1017-1036 (SAVY…FCFC).

Expressed in cotyledons, leaves, roots, stems, inflorescences and siliques. Expression higher at the top than at the base of the stem.

It is found in the membrane. It carries out the reaction S-ubiquitinyl-[E2 ubiquitin-conjugating enzyme]-L-cysteine + [acceptor protein]-L-lysine = [E2 ubiquitin-conjugating enzyme]-L-cysteine + N(6)-ubiquitinyl-[acceptor protein]-L-lysine.. The protein operates within protein modification; protein ubiquitination. Probable E3 ubiquitin ligase acting as a positive post-transcriptional regulator of 3-hydroxy-3-methylglutaryl-coenzyme A reductase activity. Might be involved in the quality control that degrades misfolded proteins. This is Probable E3 ubiquitin ligase SUD1 (SUD1) from Arabidopsis thaliana (Mouse-ear cress).